A 162-amino-acid polypeptide reads, in one-letter code: Endoribonuclease YbeY (162 aa).

3 residues coordinate Zn(2+): histidine 128, histidine 132, and histidine 138.

Belongs to the endoribonuclease YbeY family. Requires Zn(2+) as cofactor.

The protein resides in the cytoplasm. Functionally, single strand-specific metallo-endoribonuclease involved in late-stage 70S ribosome quality control and in maturation of the 3' terminus of the 16S rRNA. In Levilactobacillus brevis (strain ATCC 367 / BCRC 12310 / CIP 105137 / JCM 1170 / LMG 11437 / NCIMB 947 / NCTC 947) (Lactobacillus brevis), this protein is Endoribonuclease YbeY.